The following is a 176-amino-acid chain: UPF0098 protein Rv2140c (176 aa).

Position 2 is an N-acetylthreonine (threonine 2).

Belongs to the UPF0098 family.

The sequence is that of UPF0098 protein Rv2140c from Mycobacterium tuberculosis (strain ATCC 25618 / H37Rv).